We begin with the raw amino-acid sequence, 160 residues long: Serine-protein kinase RsbW (160 aa).

Homodimer. In stressed cells, forms a complex with RsbV. The predominant form of this complex has a stoichiometry of 2:2 (one dimer of RsbW is bound by two monomers of RsbV). In unstressed cells, forms a 2:1 complex with sigma-B.

The catalysed reaction is L-seryl-[protein] + ATP = O-phospho-L-seryl-[protein] + ADP + H(+). It carries out the reaction L-threonyl-[protein] + ATP = O-phospho-L-threonyl-[protein] + ADP + H(+). With respect to regulation, the higher affinity of RsbW for RsbV than for sigma-B, rather than a difference in the concentrations of RsbV and sigma-B, is the driving force that is responsible for the switch of RsbW to non-phosphorylated RsbV. The kinase activity of RsbW is directly regulated by changes in the ATP/ADP ratio. Its function is as follows. Negative regulator of sigma-B activity. Phosphorylates and inactivates its specific antagonist protein, RsbV. Upon phosphorylation of RsbV, RsbW is released and binds to sigma-B, thereby blocking its ability to form an RNA polymerase holoenzyme (E-sigma-B). The chain is Serine-protein kinase RsbW (rsbW) from Bacillus subtilis (strain 168).